A 374-amino-acid polypeptide reads, in one-letter code: Dual-specificity RNA methyltransferase RlmN (374 aa).

The Proton acceptor role is filled by E94. One can recognise a Radical SAM core domain in the interval 100–339 (EEDRATLCVS…VTIRKTRGDD (240 aa)). A disulfide bond links C107 and C344. [4Fe-4S] cluster is bound by residues C114, C118, and C121. Residues 168–169 (GE), S200, 222–224 (SLH), and N301 contribute to the S-adenosyl-L-methionine site. Residue C344 is the S-methylcysteine intermediate of the active site.

The protein belongs to the radical SAM superfamily. RlmN family. It depends on [4Fe-4S] cluster as a cofactor.

The protein localises to the cytoplasm. The enzyme catalyses adenosine(2503) in 23S rRNA + 2 reduced [2Fe-2S]-[ferredoxin] + 2 S-adenosyl-L-methionine = 2-methyladenosine(2503) in 23S rRNA + 5'-deoxyadenosine + L-methionine + 2 oxidized [2Fe-2S]-[ferredoxin] + S-adenosyl-L-homocysteine. It carries out the reaction adenosine(37) in tRNA + 2 reduced [2Fe-2S]-[ferredoxin] + 2 S-adenosyl-L-methionine = 2-methyladenosine(37) in tRNA + 5'-deoxyadenosine + L-methionine + 2 oxidized [2Fe-2S]-[ferredoxin] + S-adenosyl-L-homocysteine. Its function is as follows. Specifically methylates position 2 of adenine 2503 in 23S rRNA and position 2 of adenine 37 in tRNAs. m2A2503 modification seems to play a crucial role in the proofreading step occurring at the peptidyl transferase center and thus would serve to optimize ribosomal fidelity. This is Dual-specificity RNA methyltransferase RlmN from Vibrio vulnificus (strain CMCP6).